Here is a 298-residue protein sequence, read N- to C-terminus: Ornithine carbamoyltransferase (298 aa).

Carbamoyl phosphate is bound by residues 50-53 (STRT), Q77, R101, and 128-131 (HPCQ). L-ornithine contacts are provided by residues N159, D216, and 220–221 (SM). Residues 256-257 (CL) and R284 contribute to the carbamoyl phosphate site.

Belongs to the aspartate/ornithine carbamoyltransferase superfamily. OTCase family.

The protein localises to the cytoplasm. It catalyses the reaction carbamoyl phosphate + L-ornithine = L-citrulline + phosphate + H(+). It functions in the pathway amino-acid biosynthesis; L-arginine biosynthesis; L-arginine from L-ornithine and carbamoyl phosphate: step 1/3. Functionally, reversibly catalyzes the transfer of the carbamoyl group from carbamoyl phosphate (CP) to the N(epsilon) atom of ornithine (ORN) to produce L-citrulline. The chain is Ornithine carbamoyltransferase from Methylococcus capsulatus (strain ATCC 33009 / NCIMB 11132 / Bath).